The sequence spans 248 residues: Pyridoxine 5'-phosphate synthase (248 aa).

Asparagine 10 contacts 3-amino-2-oxopropyl phosphate. 12–13 (DH) contacts 1-deoxy-D-xylulose 5-phosphate. Arginine 21 is a 3-amino-2-oxopropyl phosphate binding site. The active-site Proton acceptor is histidine 46. Arginine 48 and histidine 53 together coordinate 1-deoxy-D-xylulose 5-phosphate. The Proton acceptor role is filled by glutamate 73. Threonine 103 is a 1-deoxy-D-xylulose 5-phosphate binding site. The active-site Proton donor is the histidine 194. 3-amino-2-oxopropyl phosphate contacts are provided by residues glycine 195 and 216–217 (GH).

It belongs to the PNP synthase family. In terms of assembly, homooctamer; tetramer of dimers.

The protein localises to the cytoplasm. It carries out the reaction 3-amino-2-oxopropyl phosphate + 1-deoxy-D-xylulose 5-phosphate = pyridoxine 5'-phosphate + phosphate + 2 H2O + H(+). It participates in cofactor biosynthesis; pyridoxine 5'-phosphate biosynthesis; pyridoxine 5'-phosphate from D-erythrose 4-phosphate: step 5/5. In terms of biological role, catalyzes the complicated ring closure reaction between the two acyclic compounds 1-deoxy-D-xylulose-5-phosphate (DXP) and 3-amino-2-oxopropyl phosphate (1-amino-acetone-3-phosphate or AAP) to form pyridoxine 5'-phosphate (PNP) and inorganic phosphate. This chain is Pyridoxine 5'-phosphate synthase, found in Legionella pneumophila (strain Paris).